A 155-amino-acid chain; its full sequence is Photosystem II extrinsic protein V (155 aa).

A signal peptide spans 1–20 (MFVKMIGWLVLFLFAHQTWA). Heme c-binding residues include Cys50, Cys53, His54, and His105.

The protein belongs to the cytochrome c family. PsbV subfamily. As to quaternary structure, PSII is composed of 1 copy each of membrane proteins PsbA, PsbB, PsbC, PsbD, PsbE, PsbF, PsbH, PsbI, PsbJ, PsbK, PsbL, PsbM, PsbT, PsbY, PsbZ, Psb30/Ycf12, at least 3 peripheral proteins of the oxygen-evolving complex and a large number of cofactors. It forms dimeric complexes. The extrinsic subunits in red algae are PsbO (OEC33), PsbQ', cytochrome c-550 and PsbU. Requires heme c as cofactor.

The protein localises to the plastid. It localises to the chloroplast thylakoid membrane. Functionally, one of the extrinsic, lumenal subunits of photosystem II (PSII). PSII is a light-driven water plastoquinone oxidoreductase, using light energy to abstract electrons from H(2)O, generating a proton gradient subsequently used for ATP formation. The extrinsic proteins stabilize the structure of photosystem II oxygen-evolving complex (OEC), the ion environment of oxygen evolution and protect the OEC against heat-induced inactivation. Unlike the T.vulcanus ortholog, it does not bind by itself to PSII, but requires all extrinsic members of the OEC. The polypeptide is Photosystem II extrinsic protein V (Cyanidium caldarium (Red alga)).